The primary structure comprises 385 residues: G2/mitotic-specific cyclin-B3 (385 aa).

Over residues 1 to 16 the composition is skewed to polar residues; sequence MMLRSQAKNVDLTSQA. Disordered stretches follow at residues 1 to 48 and 63 to 88; these read MMLR…HSKG and SAKR…QKSR. 2 stretches are compositionally biased toward basic and acidic residues: residues 17–28 and 63–80; these read DSRHQQKRKQAE and SAKR…RDVE.

The protein belongs to the cyclin family. Cyclin AB subfamily.

Its subcellular location is the nucleus. Its function is as follows. Could be involved at the G2/M (mitosis) transition. Interacts with the CDK1 and CDK2 protein kinases. G2/M cyclins accumulate steadily during G2 and are abruptly destroyed at mitosis. Plays a role during oocyte meiosis II. The polypeptide is G2/mitotic-specific cyclin-B3 (cyb-3) (Caenorhabditis elegans).